The sequence spans 122 residues: Co-chaperonin GroES (122 aa).

This sequence belongs to the GroES chaperonin family. Heptamer of 7 subunits arranged in a ring. Interacts with the chaperonin GroEL.

Its subcellular location is the cytoplasm. Together with the chaperonin GroEL, plays an essential role in assisting protein folding. The GroEL-GroES system forms a nano-cage that allows encapsulation of the non-native substrate proteins and provides a physical environment optimized to promote and accelerate protein folding. GroES binds to the apical surface of the GroEL ring, thereby capping the opening of the GroEL channel. This is Co-chaperonin GroES from Aquifex aeolicus (strain VF5).